The following is a 453-amino-acid chain: Kynureninase (453 aa).

Pyridoxal 5'-phosphate-binding positions include leucine 114, threonine 115, 142–145, aspartate 232, histidine 235, and tyrosine 257; that span reads FPSD. N6-(pyridoxal phosphate)lysine is present on lysine 258. A pyridoxal 5'-phosphate-binding site is contributed by tryptophan 286.

This sequence belongs to the kynureninase family. Homodimer. Requires pyridoxal 5'-phosphate as cofactor.

It localises to the cytoplasm. It carries out the reaction L-kynurenine + H2O = anthranilate + L-alanine + H(+). It catalyses the reaction 3-hydroxy-L-kynurenine + H2O = 3-hydroxyanthranilate + L-alanine + H(+). It participates in amino-acid degradation; L-kynurenine degradation; L-alanine and anthranilate from L-kynurenine: step 1/1. It functions in the pathway cofactor biosynthesis; NAD(+) biosynthesis; quinolinate from L-kynurenine: step 2/3. Catalyzes the cleavage of L-kynurenine (L-Kyn) and L-3-hydroxykynurenine (L-3OHKyn) into anthranilic acid (AA) and 3-hydroxyanthranilic acid (3-OHAA), respectively. In Cryptococcus neoformans var. neoformans serotype D (strain JEC21 / ATCC MYA-565) (Filobasidiella neoformans), this protein is Kynureninase.